A 475-amino-acid chain; its full sequence is Chromosomal replication initiator protein DnaA (475 aa).

Residues 1–73 (MSDIEQERWS…LACWQAELPD (73 aa)) are domain I, interacts with DnaA modulators. The domain II stretch occupies residues 73-131 (DVHRIDLMVRSAMRCAAPAKEAPAADPRRPEHGDGRASTELKMVATAPASANHDALGGS). The interval 132 to 354 (PLDPRLTFAS…GAINRLLAHS (223 aa)) is domain III, AAA+ region. Positions 179, 181, 182, and 183 each coordinate ATP. The tract at residues 355-475 (KLNAQPVTLE…VELLKRQLQE (121 aa)) is domain IV, binds dsDNA.

Belongs to the DnaA family. Oligomerizes as a right-handed, spiral filament on DNA at oriC.

Its subcellular location is the cytoplasm. Functionally, plays an essential role in the initiation and regulation of chromosomal replication. ATP-DnaA binds to the origin of replication (oriC) to initiate formation of the DNA replication initiation complex once per cell cycle. Binds the DnaA box (a 9 base pair repeat at the origin) and separates the double-stranded (ds)DNA. Forms a right-handed helical filament on oriC DNA; dsDNA binds to the exterior of the filament while single-stranded (ss)DNA is stabiized in the filament's interior. The ATP-DnaA-oriC complex binds and stabilizes one strand of the AT-rich DNA unwinding element (DUE), permitting loading of DNA polymerase. After initiation quickly degrades to an ADP-DnaA complex that is not apt for DNA replication. Binds acidic phospholipids. This Nitrobacter hamburgensis (strain DSM 10229 / NCIMB 13809 / X14) protein is Chromosomal replication initiator protein DnaA.